The sequence spans 2079 residues: Protein xmas (2079 aa).

The RRM domain maps to 12–83; the sequence is KTLLCRNIPE…HLFDISYADN (72 aa). Residues 112–152 form a disordered region; that stretch reads NEYGSGKPIKKPQNGSSGSGGSSMLPAIPVGPATAPVSRDR. The PCI domain maps to 342 to 525; that stretch reads DSKINAENLT…ETEYKLPRQY (184 aa). A sufficient for Orc3 binding region spans residues 835–1359; sequence PLSFGAENPE…RRDASDHKHA (525 aa). Disordered stretches follow at residues 1335–1360, 1755–1778, 1930–1963, and 2032–2079; these read RHTL…KHAM, AEET…SKRA, KAQA…TSKA, and SAAA…TGKL. Residues 1764 to 1776 show a composition bias toward basic residues; sequence HHRHHGGGQKMSK. Residues 2048 to 2059 are compositionally biased toward low complexity; the sequence is PVVSPKVQVPSV. Over residues 2070–2079 the composition is skewed to polar residues; the sequence is GPQTTKTGKL.

The protein belongs to the SAC3 family. As to quaternary structure, component of the nuclear pore complex (NPC)-associated TREX-2/AMEX complex (anchoring and mRNA export complex), composed of e(y)2, xmas and PCID2. Within the TREX-2/ AMEX complex, interactions with e(y)2 is required for localization of e(y)2 to the nuclear periphery. Interaction between the TREX-2/AMEX complex and the ORC complex is required for ORC localization to mRNPs, and consequently mRNA export. Within the TREX-2/AMEX-ORC complex, interacts with Orc6, (via C-terminus) with Orc3, and weakly interacts with Orc4. However, another report found that the interaction with Orc3 is not direct, instead it is mediated via e(y)2. Interacts with piwi. As to expression, expressed in ovaries (at protein level). In terms of tissue distribution, detected in the testes and ovaries, with expression levels higher in oocytes than in testicular cells (at protein level). Detected in the testes and ovaries (at protein level). As to expression, detected in the testes.

The protein resides in the nucleus. Its subcellular location is the nucleoplasm. It localises to the nucleus membrane. The protein localises to the cytoplasm. Involved in mRNA export and mRNA coupled transcription activation. Component of the nuclear pore complex (NPC)-associated TREX-2/AMEX complex (anchoring and mRNA export complex) which functions in docking export-competent ribonucleoprotein particles (mRNPs) to the nuclear entrance of the nuclear pore complex (nuclear basket), thereby enabling the export of mRNAs to the cytoplasm through the nuclear pores. The TREX-2/AMEX complex also functions with the transcriptional coactivator SAGA/TFTC complex, to anchor a subset of transcription sites to the nuclear pore complex basket in order to achieve efficient transcription and export of their resulting mRNAs. Within the complex, required for localization of e(y)2 to the nuclear periphery. The chain is Protein xmas from Drosophila melanogaster (Fruit fly).